A 215-amino-acid polypeptide reads, in one-letter code: Cytochrome b6 (215 aa).

A helical transmembrane segment spans residues 32–52 (IFYCLGGITLTCFLVQVATGF). C35 is a binding site for heme c. Residues H86 and H100 each coordinate heme b. 3 consecutive transmembrane segments (helical) span residues 90 to 110 (ASMM…TGGF), 116 to 136 (LTWV…VTGY), and 186 to 206 (LHTF…FLMI). Heme b contacts are provided by H187 and H202.

It belongs to the cytochrome b family. PetB subfamily. In terms of assembly, the 4 large subunits of the cytochrome b6-f complex are cytochrome b6, subunit IV (17 kDa polypeptide, PetD), cytochrome f and the Rieske protein, while the 4 small subunits are PetG, PetL, PetM and PetN. The complex functions as a dimer. It depends on heme b as a cofactor. The cofactor is heme c.

It localises to the plastid. The protein localises to the chloroplast thylakoid membrane. Its function is as follows. Component of the cytochrome b6-f complex, which mediates electron transfer between photosystem II (PSII) and photosystem I (PSI), cyclic electron flow around PSI, and state transitions. In Gossypium barbadense (Sea Island cotton), this protein is Cytochrome b6.